The primary structure comprises 116 residues: Iron-sulfur cluster insertion protein ErpA (116 aa).

Positions 44, 108, and 110 each coordinate iron-sulfur cluster.

The protein belongs to the HesB/IscA family. Homodimer. Iron-sulfur cluster serves as cofactor.

In terms of biological role, required for insertion of 4Fe-4S clusters for at least IspG. This chain is Iron-sulfur cluster insertion protein ErpA, found in Pseudomonas syringae pv. syringae (strain B728a).